We begin with the raw amino-acid sequence, 592 residues long: Protein phosphatase EYA1 (592 aa).

Disordered stretches follow at residues 1-95 and 240-320; these read MEMQ…RPYP and MTSS…PDSD. Residues 8 to 26 show a composition bias toward low complexity; it reads SPHSRLSGSSESPSGPKLG. Positions 28-63 are enriched in polar residues; sequence SHINSNSMTPNGTEVKTEPMSSSETASTTADGSLNN. 2 stretches are compositionally biased toward low complexity: residues 64–75 and 241–253; these read FSGSAIGSSSFS and TSSNTSPTTPSTN. The span at 254–287 shows a compositional bias: polar residues; that stretch reads ATYQLQEPPSGITSQAVTDPTAEYSTIHSPSTPI. Basic and acidic residues predominate over residues 288 to 303; that stretch reads KDSDSDRLRRGSDGKS. The active-site Nucleophile is Asp328. Asp328, Asp330, and Asp556 together coordinate Mg(2+). Asp330 (proton donor) is an active-site residue.

It belongs to the HAD-like hydrolase superfamily. EYA family. Probably interacts with SIX2, SIX4 and SIX5. Interacts with H2AX in response to DNA damage. Interacts with SIX3; promotes EYA1 translocation to the nucleus. Requires Mg(2+) as cofactor. Sumoylated with SUMO1. In the embryo, highly expressed in kidney with lower levels in brain. Weakly expressed in lung. In the adult, highly expressed in heart and skeletal muscle. Weakly expressed in brain and liver. No expression in eye or kidney.

It is found in the cytoplasm. The protein localises to the nucleus. It carries out the reaction O-phospho-L-tyrosyl-[protein] + H2O = L-tyrosyl-[protein] + phosphate. It catalyses the reaction O-phospho-L-seryl-[protein] + H2O = L-seryl-[protein] + phosphate. The catalysed reaction is O-phospho-L-threonyl-[protein] + H2O = L-threonyl-[protein] + phosphate. Functions both as protein phosphatase and as transcriptional coactivator for SIX1, and probably also for SIX2, SIX4 and SIX5. Tyrosine phosphatase that dephosphorylates 'Tyr-142' of histone H2AX (H2AXY142ph) and promotes efficient DNA repair via the recruitment of DNA repair complexes containing MDC1. 'Tyr-142' phosphorylation of histone H2AX plays a central role in DNA repair and acts as a mark that distinguishes between apoptotic and repair responses to genotoxic stress. Its function as histone phosphatase may contribute to its function in transcription regulation during organogenesis. Also has phosphatase activity with proteins phosphorylated on Ser and Thr residues (in vitro). Required for normal embryonic development of the craniofacial and trunk skeleton, kidneys and ears. Together with SIX1, it plays an important role in hypaxial muscle development; in this it is functionally redundant with EYA2. This is Protein phosphatase EYA1 (EYA1) from Homo sapiens (Human).